We begin with the raw amino-acid sequence, 400 residues long: MNKSIIIILLITVLDAIGIGLIMPVLPTLLNEFVSENSLATHYGVLLALYATMQVIFAPILGRLSDKYGRKPILLFSLLGAALDYLLMAFSTTLWMLYIGRIIAGITGATGAVCASAMSDVTPAKNRTRYFGFLGGVFGVGLIIGPMLGGLLGDISAHMPFIFAAISHSILLILSLLFFRETQKREALVANRTPENQTASNTVTVFFKKSLYFWLATYFIIQLIGQIPATIWVLFTQYRFDWNTTSIGMSLAVLGVLHIFFQAIVAGKLAQKWGEKTTIMISMSIDMMGCLLLAWIGHVWVILPALICLAAGGMGQPALQGYLSKSVDDNAQGKLQGTLVSLTNITGIIGPLLFAFIYSYSVAYWDGLLWLMGAILYAMLLITAYFHQRKTTPKAVISTP.

11 consecutive transmembrane segments (helical) span residues 5 to 25 (IIII…IMPV), 42 to 62 (HYGV…PILG), 72 to 92 (PILL…AFST), 94 to 114 (LWML…GAVC), 131 to 151 (FGFL…LGGL), 159 to 179 (MPFI…LLFF), 215 to 235 (LATY…WVLF), 247 to 267 (IGMS…IVAG), 291 to 311 (LLLA…CLAA), 337 to 357 (GTLV…FAFI), and 362 to 382 (VAYW…MLLI).

This sequence belongs to the major facilitator superfamily. TCR/Tet family.

It localises to the cell inner membrane. Functionally, resistance to tetracycline by an active tetracycline efflux. This is an energy-dependent process that decreases the accumulation of the antibiotic in whole cells. This protein functions as a metal-tetracycline/H(+) antiporter. In Pasteurella multocida, this protein is Tetracycline resistance protein, class H (tetA).